The chain runs to 314 residues: 2,3-dihydroxyphenylpropionate/2,3-dihydroxicinnamic acid 1,2-dioxygenase (314 aa).

The active-site Proton donor is the His-115. The active-site Proton acceptor is the His-179.

This sequence belongs to the LigB/MhpB extradiol dioxygenase family. As to quaternary structure, homotetramer. It depends on Fe(2+) as a cofactor.

It catalyses the reaction 3-(2,3-dihydroxyphenyl)propanoate + O2 = (2Z,4E)-2-hydroxy-6-oxonona-2,4-dienedioate + H(+). The enzyme catalyses (2E)-3-(2,3-dihydroxyphenyl)prop-2-enoate + O2 = (2Z,4E,7E)-2-hydroxy-6-oxonona-2,4,7-trienedioate + H(+). It participates in aromatic compound metabolism; 3-phenylpropanoate degradation. Catalyzes the non-heme iron(II)-dependent oxidative cleavage of 2,3-dihydroxyphenylpropionic acid and 2,3-dihydroxicinnamic acid into 2-hydroxy-6-ketononadienedioate and 2-hydroxy-6-ketononatrienedioate, respectively. The polypeptide is 2,3-dihydroxyphenylpropionate/2,3-dihydroxicinnamic acid 1,2-dioxygenase (Rhodococcus jostii (strain RHA1)).